The following is a 239-amino-acid chain: Sensory rhodopsin-1 (239 aa).

At 1 to 3 the chain is on the extracellular side; it reads MDA. A helical membrane pass occupies residues 4-25; that stretch reads VATAYLGGAVALIVGVAFVWLL. Over 26–34 the chain is Cytoplasmic; that stretch reads YRSLDGSPH. Residues 35-56 form a helical membrane-spanning segment; that stretch reads QSALAPLAIIPVFAGLSYVGMA. Residues 57-70 lie on the Extracellular side of the membrane; that stretch reads YDIGTVIVNGNQIV. The helical transmembrane segment at 71 to 92 threads the bilayer; the sequence is GLRYIDWLVTTPILVGYVGYAA. Topologically, residues 93 to 95 are cytoplasmic; that stretch reads GAS. Residues 96–118 traverse the membrane as a helical segment; sequence RRSIIGVMVADALMIAVGAGAVV. Over 119 to 122 the chain is Extracellular; it reads TDGT. Residues 123 to 150 form a helical membrane-spanning segment; the sequence is LKWALFGVSSIFHLSLFAYLYVIFPRVV. Residues 151–153 lie on the Cytoplasmic side of the membrane; the sequence is PDV. The chain crosses the membrane as a helical span at residues 154–181; the sequence is PEQIGLFNLLKNHIGLLWLAYPLVWLFG. Over 182–189 the chain is Extracellular; it reads PAGIGEAT. The helical transmembrane segment at 190–222 threads the bilayer; that stretch reads AAGVALTYVFLDVLAKVPYVYFFYARRRVFMHS. An N6-(retinylidene)lysine modification is found at lysine 205. Over 223–239 the chain is Cytoplasmic; sequence ESPPAPEQATVEATAAD.

The protein belongs to the archaeal/bacterial/fungal opsin family. Interacts with HTR-I.

The protein localises to the cell membrane. Functionally, involved in the control of phototaxis. Mediates both photoattractant (in the orange light) and photophobic (in the near UV light) responses. The signal is then transmitted to the sensory rhodopsin I transducer (HTR-I). In Halobacterium salinarum (strain ATCC 29341 / DSM 671 / R1), this protein is Sensory rhodopsin-1 (sopI).